The sequence spans 427 residues: Glutamate-1-semialdehyde 2,1-aminomutase 1 (427 aa).

Position 267 is an N6-(pyridoxal phosphate)lysine (K267).

It belongs to the class-III pyridoxal-phosphate-dependent aminotransferase family. HemL subfamily. In terms of assembly, homodimer. Pyridoxal 5'-phosphate is required as a cofactor.

The protein localises to the cytoplasm. The catalysed reaction is (S)-4-amino-5-oxopentanoate = 5-aminolevulinate. The protein operates within porphyrin-containing compound metabolism; protoporphyrin-IX biosynthesis; 5-aminolevulinate from L-glutamyl-tRNA(Glu): step 2/2. The protein is Glutamate-1-semialdehyde 2,1-aminomutase 1 of Macrococcus caseolyticus (strain JCSC5402) (Macrococcoides caseolyticum).